An 81-amino-acid chain; its full sequence is Protein RALF-like 7 (81 aa).

Residues 1-29 (MSARKKNRIHVFFVSIMIIISLVSGFGEG) form the signal peptide. Disulfide bonds link cysteine 46/cysteine 54 and cysteine 66/cysteine 72.

Belongs to the plant rapid alkalinization factor (RALF) family.

The protein localises to the secreted. Its function is as follows. Cell signaling peptide that may regulate plant stress, growth, and development. Mediates a rapid alkalinization of extracellular space by mediating a transient increase in the cytoplasmic Ca(2+) concentration leading to a calcium-dependent signaling events through a cell surface receptor and a concomitant activation of some intracellular mitogen-activated protein kinases. This is Protein RALF-like 7 (RALFL7) from Arabidopsis thaliana (Mouse-ear cress).